Consider the following 693-residue polypeptide: Elongation factor G (693 aa).

In terms of domain architecture, tr-type G spans 8–284 (HMVRNIGIAA…AVIDYLPAPD (277 aa)). GTP-binding positions include 17–24 (AHIDAGKT), 81–85 (DTPGH), and 135–138 (NKMD).

It belongs to the TRAFAC class translation factor GTPase superfamily. Classic translation factor GTPase family. EF-G/EF-2 subfamily.

It localises to the cytoplasm. Functionally, catalyzes the GTP-dependent ribosomal translocation step during translation elongation. During this step, the ribosome changes from the pre-translocational (PRE) to the post-translocational (POST) state as the newly formed A-site-bound peptidyl-tRNA and P-site-bound deacylated tRNA move to the P and E sites, respectively. Catalyzes the coordinated movement of the two tRNA molecules, the mRNA and conformational changes in the ribosome. The polypeptide is Elongation factor G (Nautilia profundicola (strain ATCC BAA-1463 / DSM 18972 / AmH)).